A 721-amino-acid polypeptide reads, in one-letter code: YTH domain-containing protein 1 (721 aa).

Positions 29 to 38 (EADIAEELQD) are enriched in acidic residues. The disordered stretch occupies residues 29–239 (EADIAEELQD…GGGTHSHSQK (211 aa)). The segment covering 48 to 75 (SESNGGDSSDSEPSISSVSTATSSLAGS) has biased composition (low complexity). Residues 135–151 (ASDKVKSKSPDTEDRQP) show a composition bias toward basic and acidic residues. The 138-residue stretch at 254-391 (TRFFLIKSNN…KIGGELCRLF (138 aa)) folds into the YTH domain. Residues 260–262 (KSN), tryptophan 276, and tryptophan 327 each bind RNA. Disordered regions lie at residues 424–471 (PPRS…RHHH), 580–605 (DGPGAPPLPDYPPPQRPPPPGFDKAP), and 651–721 (AGGG…DNRR). The segment covering 432–443 (GHGGGGRGGGRG) has biased composition (gly residues). Basic residues predominate over residues 451–471 (PMRHKRSYHGAPHHRPYRHHH). Residues 583-600 (GAPPLPDYPPPQRPPPPG) show a composition bias toward pro residues. Positions 651–670 (AGGGMGAGGGSGGGMGGPGG) are enriched in gly residues. Residues 699–708 (RDSRPFRERG) are compositionally biased toward basic and acidic residues.

Its subcellular location is the nucleus. Regulator of alternative splicing that specifically recognizes and binds N6-methyladenosine (m6A)-containing RNAs. Acts by acting as a reader of m6A methylation. Required for sex determination and dosage compensation via Sxl alternative splicing: m6A methylation acts as a key regulator of Sxl pre-mRNA and promotes female-specific alternative splicing of Sxl, which determines female physiognomy. M6A methylation is also required for neuronal functions. This chain is YTH domain-containing protein 1, found in Drosophila melanogaster (Fruit fly).